A 536-amino-acid polypeptide reads, in one-letter code: Multifunctional cytochrome P450 monooxygenase af510 (536 aa).

A helical transmembrane segment spans residues 4–24; the sequence is ELSTLQLSCVAFVAFMAVLVF. Residues asparagine 210 and asparagine 293 are each glycosylated (N-linked (GlcNAc...) asparagine). Position 448 (cysteine 448) interacts with heme.

Belongs to the cytochrome P450 family. Heme is required as a cofactor.

Its subcellular location is the membrane. It catalyses the reaction (+)-exo-beta-bergamotene + 2 reduced [NADPH--hemoprotein reductase] + 3 O2 = 5-dehydro-6-demethoxyfumagillol + 2 oxidized [NADPH--hemoprotein reductase] + 3 H2O + 2 H(+). The protein operates within secondary metabolite biosynthesis; terpenoid biosynthesis. Functionally, multifunctional cytochrome P450 monooxygenase; part of the gene cluster that mediates the biosynthesis of fumagillin, a meroterpenoid that has numerous biological activities including irreversible inhibition of human type 2 methionine aminopeptidase (METAP2). Within the pathway, the multifunctional cytochrome P450 monooxygenase af510 acts as a 2,4,6-trichlorophenol monooxygenase that first performs the C-H hydroxylation at the bridgehead C5 position to yield 5R-hydroxyl-beta-trans-bergamotene. Subsequently, a four electron oxidation initiated at C-9 coupled to cleavage of the cyclobutane C5-C8 bond of the bicyclo[3.1.1] core yields the epoxyketone intermediate 5-keto-cordycol. An additional epoxidation reaction also catalyzed by af510 then furnishes the characteristic bisepoxide ketone 5-keto-demethoxyfumagillol. The pathway begins with the conversion of farnesyl pyrophosphate (FPP) to beta-trans-bergamotene by the membrane-bound beta-trans-bergamotene synthase af520. The multifunctional cytochrome P450 monooxygenase af510 then converts beta-trans-bergamotene into 5-keto-demethoxyfumagillol via several oxydation steps. 5-keto-demethoxyfumagillol is then subjected to successive C-6 hydroxylation and O-methylation by the dioxygenase af480 and O-methyltransferase af390-400, respectively, to yield 5-keto-fumagillol, which is then stereoselectively reduced by the keto-reductase af490 to 5R-hydroxy-seco-sesquiterpene. The next step is the polyketide transferase af380-catalyzed transfer of a dodecapentaenoyl group synthesized by the polyketide synthase af370 onto 5R-hydroxy-seco-sesquiterpene which leads to the production of prefumagillin. Finally, oxidative cleavage by the monooxygenase af470 converts prefumagillin to fumagillin. The polypeptide is Multifunctional cytochrome P450 monooxygenase af510 (Aspergillus fumigatus (strain ATCC MYA-4609 / CBS 101355 / FGSC A1100 / Af293) (Neosartorya fumigata)).